The sequence spans 511 residues: N-acetylgalactosamine-6-O-sulfatase (511 aa).

Position 83 is a 3-oxoalanine (Ser) (Ser-83).

Belongs to the sulfatase family. Post-translationally, the conversion to 3-oxoalanine (also known as C-formylglycine, FGly), of a serine or cysteine residue in prokaryotes and of a cysteine residue in eukaryotes, is critical for catalytic activity.

Its function is as follows. Exosulfatase involved in the degradation of the glycosaminoglycans (GAGs) chondroitin sulfate (CS) and dermatan sulfate (DS). Catalyzes the hydrolysis of the 6-sulfate groups of the N-acetyl-D-galactosamine 6-sulfate units. GAG-specific sulfatases play a key role in the persistence of the major human gut symbiont B.thetaiotaomicron in the host gastrointestinal tract. The protein is N-acetylgalactosamine-6-O-sulfatase of Bacteroides thetaiotaomicron (strain ATCC 29148 / DSM 2079 / JCM 5827 / CCUG 10774 / NCTC 10582 / VPI-5482 / E50).